A 176-amino-acid chain; its full sequence is uncharacterized protein (176 aa).

The disordered stretch occupies residues 71-176; it reads RDDMSSDSDG…YSTDDDEDDY (106 aa). Composition is skewed to low complexity over residues 77 to 87 and 100 to 109; these read DSDGPAASPPG and SYSSSDSSAR. Residues 140-152 show a composition bias toward basic residues; sequence KARRPARKKKRIG.

This is an uncharacterized protein from Orgyia pseudotsugata multicapsid polyhedrosis virus (OpMNPV).